The sequence spans 452 residues: MASSTHVPIAAIATAPGRGGIGVVRISGPDLSALARRLFGRELTPRHAHYLPFTAETGEHLDEGIALYFRAPQSYTGEDVLELQGHGGPAVLRRILERCLQAGADLGVRLAEPGEFTRRAFLNDRMDLAQAEAVADLIDASSVAAARGAMASLSGEFSARVNALSDRIVHLRMLVEATLDFPEEEIDFLEKYQARPTLQALAADLATLIAQARQGVILREGLHVVLAGKPNVGKSSLLNALAGDDIAIVTPIAGTTRDKVVQEIHIDGVPLHIVDTAGLRDTDDTVESIGIARTWKEIERADVILHLQDATQPADELDAQIVARLPARTPLLTVFNKVDLLDQPFQAQAGQLGISAREGAGLDELRARLLALAGWNPGAESPWLARERHVHALQRAAEHLEAATEHAAQDDRVLDLFAEELRLAHDSLSSITGKFTSDDLLGEIFSSFCIGK.

Residues R25, E82, and R125 each coordinate (6S)-5-formyl-5,6,7,8-tetrahydrofolate. One can recognise a TrmE-type G domain in the interval G221–G374. Position 231 (N231) interacts with K(+). GTP-binding positions include N231–S236, T250–T256, D275–G278, and S355–R357. Residue S235 participates in Mg(2+) binding. Residues T250, I252, and T255 each coordinate K(+). T256 contributes to the Mg(2+) binding site. Residue K452 participates in (6S)-5-formyl-5,6,7,8-tetrahydrofolate binding.

It belongs to the TRAFAC class TrmE-Era-EngA-EngB-Septin-like GTPase superfamily. TrmE GTPase family. As to quaternary structure, homodimer. Heterotetramer of two MnmE and two MnmG subunits. K(+) is required as a cofactor.

The protein localises to the cytoplasm. Its function is as follows. Exhibits a very high intrinsic GTPase hydrolysis rate. Involved in the addition of a carboxymethylaminomethyl (cmnm) group at the wobble position (U34) of certain tRNAs, forming tRNA-cmnm(5)s(2)U34. In Bordetella petrii (strain ATCC BAA-461 / DSM 12804 / CCUG 43448), this protein is tRNA modification GTPase MnmE.